Consider the following 262-residue polypeptide: Phosphatidylserine decarboxylase proenzyme (262 aa).

Catalysis depends on charge relay system; for autoendoproteolytic cleavage activity residues Asp-86, His-142, and Ser-226. Residue Ser-226 is the Schiff-base intermediate with substrate; via pyruvic acid; for decarboxylase activity of the active site. A Pyruvic acid (Ser); by autocatalysis modification is found at Ser-226.

The protein belongs to the phosphatidylserine decarboxylase family. PSD-B subfamily. Prokaryotic type I sub-subfamily. Heterodimer of a large membrane-associated beta subunit and a small pyruvoyl-containing alpha subunit. It depends on pyruvate as a cofactor. Is synthesized initially as an inactive proenzyme. Formation of the active enzyme involves a self-maturation process in which the active site pyruvoyl group is generated from an internal serine residue via an autocatalytic post-translational modification. Two non-identical subunits are generated from the proenzyme in this reaction, and the pyruvate is formed at the N-terminus of the alpha chain, which is derived from the carboxyl end of the proenzyme. The autoendoproteolytic cleavage occurs by a canonical serine protease mechanism, in which the side chain hydroxyl group of the serine supplies its oxygen atom to form the C-terminus of the beta chain, while the remainder of the serine residue undergoes an oxidative deamination to produce ammonia and the pyruvoyl prosthetic group on the alpha chain. During this reaction, the Ser that is part of the protease active site of the proenzyme becomes the pyruvoyl prosthetic group, which constitutes an essential element of the active site of the mature decarboxylase.

Its subcellular location is the cell membrane. The enzyme catalyses a 1,2-diacyl-sn-glycero-3-phospho-L-serine + H(+) = a 1,2-diacyl-sn-glycero-3-phosphoethanolamine + CO2. Its pathway is phospholipid metabolism; phosphatidylethanolamine biosynthesis; phosphatidylethanolamine from CDP-diacylglycerol: step 2/2. In terms of biological role, catalyzes the formation of phosphatidylethanolamine (PtdEtn) from phosphatidylserine (PtdSer). This chain is Phosphatidylserine decarboxylase proenzyme, found in Bacillus cereus (strain AH820).